Here is a 335-residue protein sequence, read N- to C-terminus: Epidermal differentiation-specific protein (335 aa).

Beta/gamma crystallin 'Greek key' domains lie at 2-42 (NTIT…KIVG), 43-81 (QPWI…RLIT), 87-126 (PQIT…RVQR), and 127-169 (GAWA…YPLR).

This sequence belongs to the beta/gamma-crystallin family. As to expression, epidermis specific.

The polypeptide is Epidermal differentiation-specific protein (Cynops pyrrhogaster (Japanese fire-bellied newt)).